The following is a 160-amino-acid chain: SsrA-binding protein (160 aa).

Positions 133–160 are disordered; that stretch reads GKKLHDKRDTEKERDWKREQQRLLRDRG. Positions 138-160 are enriched in basic and acidic residues; sequence DKRDTEKERDWKREQQRLLRDRG.

It belongs to the SmpB family.

It localises to the cytoplasm. Its function is as follows. Required for rescue of stalled ribosomes mediated by trans-translation. Binds to transfer-messenger RNA (tmRNA), required for stable association of tmRNA with ribosomes. tmRNA and SmpB together mimic tRNA shape, replacing the anticodon stem-loop with SmpB. tmRNA is encoded by the ssrA gene; the 2 termini fold to resemble tRNA(Ala) and it encodes a 'tag peptide', a short internal open reading frame. During trans-translation Ala-aminoacylated tmRNA acts like a tRNA, entering the A-site of stalled ribosomes, displacing the stalled mRNA. The ribosome then switches to translate the ORF on the tmRNA; the nascent peptide is terminated with the 'tag peptide' encoded by the tmRNA and targeted for degradation. The ribosome is freed to recommence translation, which seems to be the essential function of trans-translation. The chain is SsrA-binding protein from Rhizorhabdus wittichii (strain DSM 6014 / CCUG 31198 / JCM 15750 / NBRC 105917 / EY 4224 / RW1) (Sphingomonas wittichii).